The primary structure comprises 275 residues: Large ribosomal subunit protein uL2 (275 aa).

Disordered regions lie at residues 38-59 and 222-275; these read KKHA…GGHK and GSAM…RKQK. Composition is skewed to basic residues over residues 39 to 59 and 254 to 275; these read KHAG…GGHK and MGKK…RKQK.

It belongs to the universal ribosomal protein uL2 family. In terms of assembly, part of the 50S ribosomal subunit. Forms a bridge to the 30S subunit in the 70S ribosome.

Its function is as follows. One of the primary rRNA binding proteins. Required for association of the 30S and 50S subunits to form the 70S ribosome, for tRNA binding and peptide bond formation. It has been suggested to have peptidyltransferase activity; this is somewhat controversial. Makes several contacts with the 16S rRNA in the 70S ribosome. In Herpetosiphon aurantiacus (strain ATCC 23779 / DSM 785 / 114-95), this protein is Large ribosomal subunit protein uL2.